The following is a 551-amino-acid chain: Adenine deaminase (551 aa).

Belongs to the metallo-dependent hydrolases superfamily. Adenine deaminase family. The cofactor is Mn(2+).

It carries out the reaction adenine + H2O + H(+) = hypoxanthine + NH4(+). The polypeptide is Adenine deaminase (Leuconostoc citreum (strain KM20)).